Here is a 124-residue protein sequence, read N- to C-terminus: UPF0231 protein SO_3983 (124 aa).

It belongs to the UPF0231 family.

The chain is UPF0231 protein SO_3983 from Shewanella oneidensis (strain ATCC 700550 / JCM 31522 / CIP 106686 / LMG 19005 / NCIMB 14063 / MR-1).